The sequence spans 496 residues: Probable CtpA-like serine protease (496 aa).

Residues 1-26 (MRKCFFMSHNPEEKQSNLDSNHKNES) are disordered. The segment covering 10–25 (NPEEKQSNLDSNHKNE) has biased composition (basic and acidic residues). The chain crosses the membrane as a helical span at residues 39–59 (FILLLLGVVIITAGITVAATI). The PDZ domain occupies 124–206 (TKSFNEDVSG…TTVKLTIKRG (83 aa)). Active-site charge relay system residues include Ser329, Asp340, and Lys354.

It belongs to the peptidase S41A family.

It is found in the cell membrane. The chain is Probable CtpA-like serine protease from Staphylococcus haemolyticus (strain JCSC1435).